We begin with the raw amino-acid sequence, 477 residues long: GTPase Der (477 aa).

EngA-type G domains follow at residues 3–167 (LTIA…GKER) and 206–382 (LRIA…RMWN). Residues 9–16 (GRPNVGKS), 56–60 (DTAGL), 119–122 (NKSE), 212–219 (GRPNTGKS), 259–263 (DTAGL), and 324–327 (NKWD) each bind GTP. The region spanning 383 to 467 (RRISTAKLNR…PIRISLRASD (85 aa)) is the KH-like domain.

Belongs to the TRAFAC class TrmE-Era-EngA-EngB-Septin-like GTPase superfamily. EngA (Der) GTPase family. Associates with the 50S ribosomal subunit.

Its function is as follows. GTPase that plays an essential role in the late steps of ribosome biogenesis. In Bartonella quintana (strain Toulouse) (Rochalimaea quintana), this protein is GTPase Der.